A 218-amino-acid chain; its full sequence is PKHD-type hydroxylase Sala_1910 (218 aa).

The Fe2OG dioxygenase domain maps to 74 to 172 (RIAPPLLTRY…RLVAITFIQS (99 aa)). The Fe cation site is built by His92, Asp94, and His153. Residue Arg163 participates in 2-oxoglutarate binding.

The cofactor is Fe(2+). Requires L-ascorbate as cofactor.

The chain is PKHD-type hydroxylase Sala_1910 from Sphingopyxis alaskensis (strain DSM 13593 / LMG 18877 / RB2256) (Sphingomonas alaskensis).